Consider the following 263-residue polypeptide: TLC domain-containing protein 4 (263 aa).

4 consecutive transmembrane segments (helical) span residues 7–27 (LLIS…YFVS), 53–73 (VVST…FLFD), 90–110 (VNIA…ILYW), and 124–144 (ASLY…IGNF). In terms of domain architecture, TLC spans 44-246 (KKKIEWNSRV…ISKGCIKVIS (203 aa)). An N6-acetyllysine modification is found at lysine 165. 2 consecutive transmembrane segments (helical) span residues 173-193 (IVIN…ASML) and 211-231 (LGVL…VMNV).

This sequence belongs to the TLCD4 family.

It localises to the membrane. This is TLC domain-containing protein 4 from Homo sapiens (Human).